The following is a 429-amino-acid chain: O-methyltransferase phnC (429 aa).

D285 contacts S-adenosyl-L-methionine.

The protein belongs to the class I-like SAM-binding methyltransferase superfamily. Cation-independent O-methyltransferase family. COMT subfamily.

It catalyses the reaction (2'R)-atrovenetin + S-adenosyl-L-methionine = deoxyherqueinone + S-adenosyl-L-homocysteine + H(+). It participates in secondary metabolite biosynthesis. Functionally, O-methyltransferase; part of the gene cluster that mediates the biosynthesis of phenalenones such as herqueinone, compounds that have been reported to treat tumors, bacterial infections and/or mycoses, and rheumatic diseases. The non-reducing polyketide synthase phnA synthesizes the heptaketide backbone and cyclizes it into the angular, hemiketal-containing naphtho-gamma-pyrone prephenalenone. The product template (PT) domain of phnA catalyzes only the C4-C9 aldol condensation, which is unprecedented among known PT domains. The transformation of prephenalenone to phenalenones requires an FAD-dependent monooxygenase phnB, which catalyzes the C2 aromatic hydroxylation of prephenalenone and ring opening of the gamma-pyrone ring simultaneously. Subsequent intramolecular deprotonation of C3 phenolic oxygen accelerates phenalenone ring closure to yield the tricyclic phenalenone core with a C2 hydroxylation. The prenyltransferase phnF further catalyzes reverse C-prenylation of phenalenone by direct electrophilic substitution at C6, or possibly via first a forward O-prenylation of a neighboring phenol in phenalenone, followed by a Claisen rearrangement. The hydroalkoxylation enzyme phnH catalyzes the 5-exo-trig cyclization via acid catalysis after the spontaneous deprotonation of 7-OH, which leads to the formation of the dihydrobenzofuran atrovenetin. Atrovenetin is further converted to deoxyherqueinone by the O-methyltransferase phnC which can methylate C2-OH to stabilize the northern portion of the phenalenone core. Finally, the oxidoreductase phnG converts deoxyherqueinone to herqueinone via C6 hydroxylation. The chain is O-methyltransferase phnC from Penicillium herquei.